Here is a 306-residue protein sequence, read N- to C-terminus: Probable zinc metalloprotease VDBG_06923 (306 aa).

Residues Met-1 to Ala-28 form the signal peptide. Asp-12 and Glu-45 together coordinate Zn(2+). Asn-60 carries N-linked (GlcNAc...) asparagine glycosylation. Asp-72 is a Zn(2+) binding site. One can recognise a Fibronectin type-III domain in the interval Ala-218–Thr-306. Residues Asn-228, Asn-234, and Asn-244 are each glycosylated (N-linked (GlcNAc...) asparagine).

It belongs to the peptidase M28 family. M28B subfamily. It depends on Zn(2+) as a cofactor.

It localises to the secreted. The protein is Probable zinc metalloprotease VDBG_06923 of Verticillium alfalfae (strain VaMs.102 / ATCC MYA-4576 / FGSC 10136) (Verticillium wilt of alfalfa).